The following is a 348-amino-acid chain: S-adenosylmethionine:tRNA ribosyltransferase-isomerase (348 aa).

The protein belongs to the QueA family. As to quaternary structure, monomer.

It localises to the cytoplasm. It catalyses the reaction 7-aminomethyl-7-carbaguanosine(34) in tRNA + S-adenosyl-L-methionine = epoxyqueuosine(34) in tRNA + adenine + L-methionine + 2 H(+). It participates in tRNA modification; tRNA-queuosine biosynthesis. Transfers and isomerizes the ribose moiety from AdoMet to the 7-aminomethyl group of 7-deazaguanine (preQ1-tRNA) to give epoxyqueuosine (oQ-tRNA). The polypeptide is S-adenosylmethionine:tRNA ribosyltransferase-isomerase (Amoebophilus asiaticus (strain 5a2)).